A 426-amino-acid chain; its full sequence is Zinc finger protein 662 (426 aa).

One can recognise a KRAB domain in the interval 1-44 (MLENYGAVASLAAFPFPKPALISQLERGETPWCSVPRGALDGEA). 8 C2H2-type zinc fingers span residues 192–214 (YICE…QKTH), 220–242 (YGCK…QRIH), 248–270 (YECQ…QRIH), 276–298 (FECK…QRIH), 304–326 (YTCK…QRMH), 332–354 (YECK…QRVH), 360–382 (HECT…QRIH), and 388–410 (YKCN…QRRH).

Belongs to the krueppel C2H2-type zinc-finger protein family.

It is found in the nucleus. Its function is as follows. May be involved in transcriptional regulation. In Homo sapiens (Human), this protein is Zinc finger protein 662 (ZNF662).